The primary structure comprises 186 residues: Alkyl hydroperoxide reductase AhpD (186 aa).

Cys132 (proton donor) is an active-site residue. A disulfide bridge links Cys132 with Cys135. Catalysis depends on Cys135, which acts as the Cysteine sulfenic acid (-SOH) intermediate.

It belongs to the AhpD family.

It catalyses the reaction N(6)-[(R)-dihydrolipoyl]-L-lysyl-[lipoyl-carrier protein] + a hydroperoxide = N(6)-[(R)-lipoyl]-L-lysyl-[lipoyl-carrier protein] + an alcohol + H2O. In terms of biological role, antioxidant protein with alkyl hydroperoxidase activity. Required for the reduction of the AhpC active site cysteine residues and for the regeneration of the AhpC enzyme activity. The protein is Alkyl hydroperoxide reductase AhpD of Anaeromyxobacter dehalogenans (strain 2CP-1 / ATCC BAA-258).